The sequence spans 75 residues: Antimicrobial peptide Meucin-49-1 (75 aa).

The first 22 residues, Met-1 to Ser-22, serve as a signal peptide directing secretion.

The protein belongs to the non-disulfide-bridged peptide (NDBP) superfamily. Long chain multifunctional peptide (group 2) family. As to expression, expressed by the venom gland.

It localises to the secreted. In terms of biological role, antimicrobial peptide. The chain is Antimicrobial peptide Meucin-49-1 from Mesobuthus eupeus (Lesser Asian scorpion).